A 113-amino-acid chain; its full sequence is Small ribosomal subunit protein bS6 (113 aa).

The protein belongs to the bacterial ribosomal protein bS6 family.

In terms of biological role, binds together with bS18 to 16S ribosomal RNA. This Wigglesworthia glossinidia brevipalpis protein is Small ribosomal subunit protein bS6.